A 554-amino-acid chain; its full sequence is Gamma-aminobutyric acid receptor subunit alpha-4 (554 aa).

The signal sequence occupies residues 1–35 (MVSAKKVPAIALSAGVSFALLRFLCLAVCLNESPG). Over 36–259 (QNQKEEKLCT…FHLRRKMGYF (224 aa)) the chain is Extracellular. N-linked (GlcNAc...) asparagine glycosylation is present at asparagine 47. Arginine 100 contacts 4-aminobutanoate. Asparagine 144 and asparagine 157 each carry an N-linked (GlcNAc...) asparagine glycan. Threonine 163 contacts 4-aminobutanoate. The cysteines at positions 172 and 186 are disulfide-linked. Residues 260–280 (MIQTYIPCIMTVILSQVSFWI) traverse the membrane as a helical segment. Residues 281-284 (NKES) are Cytoplasmic-facing. Residues 285-305 (VPARTVFGITTVLTMTTLSIS) form a helical membrane-spanning segment. Over 306-318 (ARHSLPKVSYATA) the chain is Extracellular. The chain crosses the membrane as a helical span at residues 319–341 (MDWFIAVCFAFVFSALIEFAAVN). Residues 342-517 (YFTNIQMEKA…PPPSGSGTSK (176 aa)) are Cytoplasmic-facing. Disordered stretches follow at residues 350-381 (KAKRKTSKPPQEVPAAPVQREKHPEAPLQNTN), 397-435 (ESDVGNRTEVGNHSSKSSTVVQESSKGTPRSYLASSPNP), 452-471 (PSASPTSIRTGYMPRKASVG), and 495-515 (ATGKLSATPPPSAPPPSGSGT). Positions 410 to 422 (SSKSSTVVQESSK) are enriched in low complexity. A compositionally biased stretch (pro residues) spans 502–511 (TPPPSAPPPS). A helical transmembrane segment spans residues 518 to 540 (IDKYARILFPVTFGAFNMVYWVV). Residues 541 to 554 (YLSKDTMEKSESLM) are Extracellular-facing.

Belongs to the ligand-gated ion channel (TC 1.A.9) family. Gamma-aminobutyric acid receptor (TC 1.A.9.5) subfamily. GABRA4 sub-subfamily. As to quaternary structure, heteropentamer, formed by a combination of alpha (GABRA1-6), beta (GABRB1-3), gamma (GABRG1-3), delta (GABRD), epsilon (GABRE), rho (GABRR1-3), pi (GABRP) and theta (GABRQ) chains, each subunit exhibiting distinct physiological and pharmacological properties. As to expression, expressed in the brain.

It localises to the cell membrane. It is found in the postsynaptic cell membrane. The enzyme catalyses chloride(in) = chloride(out). Its activity is regulated as follows. Potentiated by histamine. Its function is as follows. Alpha subunit of the heteropentameric ligand-gated chloride channel gated by gamma-aminobutyric acid (GABA), a major inhibitory neurotransmitter in the brain. GABA-gated chloride channels, also named GABA(A) receptors (GABAAR), consist of five subunits arranged around a central pore and contain GABA active binding site(s) located at the alpha and beta subunit interface(s). When activated by GABA, GABAARs selectively allow the flow of chloride anions across the cell membrane down their electrochemical gradient. GABAARs containing alpha-4 are predominantly extrasynaptic, contributing to tonic inhibition in dentate granule cells and thalamic relay neurons. Extrasynaptic alpha-4-containing GABAARs control levels of excitability and network activity. GABAAR containing alpha-4-beta-3-delta subunits can simultaneously bind GABA and histamine where histamine binds at the interface of two neighboring beta subunits, which may be involved in the regulation of sleep and wakefulness. This chain is Gamma-aminobutyric acid receptor subunit alpha-4, found in Homo sapiens (Human).